The chain runs to 412 residues: F-box/WD repeat-containing protein 4 (412 aa).

In terms of domain architecture, F-box spans G25–I71. WD repeat units follow at residues R154–I190, T193–L229, Q236–L277, M283–L321, K327–R366, and H373–F409.

Part of a SCF (SKP1-cullin-F-box) protein ligase complex. Interacts with POUF51. In terms of tissue distribution, expressed in brain, kidney, lung and liver.

In terms of biological role, probably recognizes and binds to some phosphorylated proteins and promotes their ubiquitination and degradation. Likely to be involved in key signaling pathways crucial for normal limb development. May participate in Wnt signaling. This is F-box/WD repeat-containing protein 4 (FBXW4) from Homo sapiens (Human).